We begin with the raw amino-acid sequence, 750 residues long: Sulfhydryl oxidase 1 (750 aa).

The signal sequence occupies residues 1–32 (MRRCGRHSGPPSLLLLLLLLPPLLLSVPGAYA). The region spanning 33 to 159 (ARLSVLYSSS…RMRLIDALES (127 aa)) is the Thioredoxin domain. Catalysis depends on nucleophile residues Cys-73 and Cys-76. 2 disulfides stabilise this stretch: Cys-73-Cys-76 and Cys-104-Cys-113. 2 N-linked (GlcNAc...) asparagine glycosylation sites follow: Asn-133 and Asn-246. Cys-396 and Cys-408 are disulfide-bonded. An ERV/ALR sulfhydryl oxidase domain is found at 399 to 506 (SEPHFRGFPC…EDPQFPKVQW (108 aa)). Residues Arg-404, Trp-411, His-415, Asp-454, His-458, 481–488 (WTSHNRVN), Lys-503, and Trp-506 each bind FAD. Residues Cys-452 and Cys-455 are joined by a disulfide bond. The cysteines at positions 512 and 515 are disulfide-linked. 2 disordered regions span residues 545 to 567 (VRDP…ASPN) and 585 to 632 (EQAA…PEHT). The span at 587–597 (AASAASPGATA) shows a compositional bias: low complexity. A helical transmembrane segment spans residues 710-730 (FLDISLCVGLYSVSFMGLLAM).

Belongs to the quiescin-sulfhydryl oxidase (QSOX) family. As to quaternary structure, monomer. FAD serves as cofactor. N-glycosylated. O-glycosylated on Thr and Ser residues. In terms of tissue distribution, isoform 3: Detected in seminal vesicle fluid (at protein level). Isoform 1: Detected in brain, hypophysis, heart, testis and the seminal vesicle. Isoform 3: Highly expressed in the seminal vesicles followed by testis, heart, brain, thymus, hypophysis and lung. Also expressed in prostate, kidney, spleen, liver.

The protein localises to the golgi apparatus membrane. Its subcellular location is the secreted. It carries out the reaction 2 R'C(R)SH + O2 = R'C(R)S-S(R)CR' + H2O2. In terms of biological role, catalyzes the oxidation of sulfhydryl groups in peptide and protein thiols to disulfides with the reduction of oxygen to hydrogen peroxide. Plays a role in disulfide bond formation in a variety of extracellular proteins. In fibroblasts, required for normal incorporation of laminin into the extracellular matrix, and thereby for normal cell-cell adhesion and cell migration. The sequence is that of Sulfhydryl oxidase 1 (Qsox1) from Rattus norvegicus (Rat).